The sequence spans 750 residues: 5-methyltetrahydropteroyltriglutamate--homocysteine methyltransferase (750 aa).

5-methyltetrahydropteroyltri-L-glutamate is bound by residues 15–18 (RELK) and lysine 114. L-homocysteine is bound by residues 425–427 (IGS) and glutamate 478. L-methionine contacts are provided by residues 425 to 427 (IGS) and glutamate 478. Residue tryptophan 555 coordinates 5-methyltetrahydropteroyltri-L-glutamate. Aspartate 593 is a binding site for L-homocysteine. Position 593 (aspartate 593) interacts with L-methionine. 5-methyltetrahydropteroyltri-L-glutamate is bound at residue glutamate 599. Positions 636, 638, and 660 each coordinate Zn(2+). The active-site Proton donor is histidine 689. Cysteine 721 is a Zn(2+) binding site.

Belongs to the vitamin-B12 independent methionine synthase family. Zn(2+) serves as cofactor.

The catalysed reaction is 5-methyltetrahydropteroyltri-L-glutamate + L-homocysteine = tetrahydropteroyltri-L-glutamate + L-methionine. The protein operates within amino-acid biosynthesis; L-methionine biosynthesis via de novo pathway; L-methionine from L-homocysteine (MetE route): step 1/1. Catalyzes the transfer of a methyl group from 5-methyltetrahydrofolate to homocysteine resulting in methionine formation. This is 5-methyltetrahydropteroyltriglutamate--homocysteine methyltransferase from Streptococcus sanguinis (strain SK36).